Reading from the N-terminus, the 51-residue chain is UPF0337 protein NE0131 (51 aa).

This sequence belongs to the UPF0337 (CsbD) family.

The polypeptide is UPF0337 protein NE0131 (Nitrosomonas europaea (strain ATCC 19718 / CIP 103999 / KCTC 2705 / NBRC 14298)).